The chain runs to 389 residues: Phospho-N-acetylmuramoyl-pentapeptide-transferase (389 aa).

Helical transmembrane passes span 25–45 (RAVM…PWVI), 73–93 (TMGG…WADL), 97–117 (FIWI…VDDY), 134–154 (FFWQ…SVSE), 190–210 (VSYP…IVGS), 222–242 (GLVI…AYVM), 258–278 (GAGE…AFLW), 286–306 (VFMG…IAVI), 311–331 (IVLF…MLQV), and 366–386 (QVVV…LSSL).

Belongs to the glycosyltransferase 4 family. MraY subfamily. Mg(2+) is required as a cofactor.

It is found in the cell inner membrane. The enzyme catalyses UDP-N-acetyl-alpha-D-muramoyl-L-alanyl-gamma-D-glutamyl-meso-2,6-diaminopimeloyl-D-alanyl-D-alanine + di-trans,octa-cis-undecaprenyl phosphate = di-trans,octa-cis-undecaprenyl diphospho-N-acetyl-alpha-D-muramoyl-L-alanyl-D-glutamyl-meso-2,6-diaminopimeloyl-D-alanyl-D-alanine + UMP. The protein operates within cell wall biogenesis; peptidoglycan biosynthesis. Its function is as follows. Catalyzes the initial step of the lipid cycle reactions in the biosynthesis of the cell wall peptidoglycan: transfers peptidoglycan precursor phospho-MurNAc-pentapeptide from UDP-MurNAc-pentapeptide onto the lipid carrier undecaprenyl phosphate, yielding undecaprenyl-pyrophosphoryl-MurNAc-pentapeptide, known as lipid I. This is Phospho-N-acetylmuramoyl-pentapeptide-transferase from Polynucleobacter necessarius subsp. necessarius (strain STIR1).